The chain runs to 357 residues: Neuronal-specific septin-3 (357 aa).

Over residues 1 to 10 (MSKGLPETRT) the composition is skewed to basic and acidic residues. The tract at residues 1-29 (MSKGLPETRTDAAMSELVPEPRPKPAVPM) is disordered. One can recognise a Septin-type G domain in the interval 58–330 (TGFDFNIMVV…ETYRAKRLND (273 aa)). The interval 68–75 (GQSGLGKS) is G1 motif. Residue 68-75 (GQSGLGKS) coordinates GTP. Position 91 is a phosphoserine (Ser91). Thr102 serves as a coordination point for GTP. A G3 motif region spans residues 125 to 128 (DTPG). The G4 motif stretch occupies residues 207–210 (AKAD). Residues 208 to 216 (KADTMTLEE), Gly264, and Arg279 contribute to the GTP site.

Belongs to the TRAFAC class TrmE-Era-EngA-EngB-Septin-like GTPase superfamily. Septin GTPase family. Septins polymerize into heterooligomeric protein complexes that form filaments, and can associate with cellular membranes, actin filaments and microtubules. GTPase activity is required for filament formation. In terms of processing, phosphorylated by PKG on serine residues. Phosphorylated by PKG on Ser-91.

It is found in the cytoplasm. The protein resides in the cytoskeleton. Its subcellular location is the synapse. In terms of biological role, filament-forming cytoskeletal GTPase. May play a role in cytokinesis (Potential). This chain is Neuronal-specific septin-3, found in Bos taurus (Bovine).